The primary structure comprises 1475 residues: Mediator of RNA polymerase II transcription subunit 1.1 (1475 aa).

3 disordered regions span residues 579 to 600, 645 to 894, and 908 to 1475; these read STIG…LTSM, GLAS…KMRE, and PDVE…IDDE. Residues 655-666 are compositionally biased toward low complexity; it reads PVAAAAAAPGGP. The span at 755 to 766 shows a compositional bias: polar residues; the sequence is QRSSSEQHNPNP. A compositionally biased stretch (low complexity) spans 767–800; sequence HQMSQYQMQQYQQNQQFRMHQMQQQQQQQFQMQS. Residues 810 to 819 are compositionally biased toward acidic residues; sequence TDEDSDEECD. The span at 829 to 838 shows a compositional bias: low complexity; it reads STSSRMSSVP. The span at 869–880 shows a compositional bias: pro residues; sequence TPSPLSAPPKPF. The span at 915–929 shows a compositional bias: low complexity; it reads QQLSSSSSSSQAEAS. Over residues 941–952 the composition is skewed to pro residues; it reads PPKPSSSSAPPP. Low complexity-rich tracts occupy residues 969 to 989 and 1037 to 1049; these read QQEQ…SELA and QKPT…STSS. 3 stretches are compositionally biased toward basic and acidic residues: residues 1052–1070, 1080–1148, and 1155–1180; these read PPKK…EKLI, VVDD…EKEP, and EKKD…KEYS. The stretch at 1098 to 1135 forms a coiled coil; that stretch reads DRDRDEDREKVRDKEDKAQREKDKKEKERERRRQRDRD. Positions 1181 to 1193 are enriched in polar residues; it reads KASTTSLIPTLSL. Positions 1199-1215 are enriched in basic and acidic residues; the sequence is PKKDTVEEEKKDVKEEA. The segment covering 1242 to 1252 has biased composition (low complexity); it reads APVAPAVQQQQ. Pro residues predominate over residues 1281-1291; sequence PLQPPPPPQMT. Over residues 1308–1317 the composition is skewed to polar residues; sequence PGSSRPSGNR. 2 stretches are compositionally biased toward pro residues: residues 1320-1334 and 1425-1440; these read PLPP…PPPD and PPAP…PKDP.

This sequence belongs to the Mediator complex subunit 1 family. As to quaternary structure, component of the Mediator complex.

The protein localises to the nucleus. Its function is as follows. Component of the Mediator complex, a coactivator involved in the regulated transcription of nearly all RNA polymerase II-dependent genes. Mediator functions as a bridge to convey information from gene-specific regulatory proteins to the basal RNA polymerase II transcription machinery. Mediator is recruited to promoters by direct interactions with regulatory proteins and serves as a scaffold for the assembly of a functional preinitiation complex with RNA polymerase II and the general transcription factors. This is Mediator of RNA polymerase II transcription subunit 1.1 (sop-3) from Caenorhabditis elegans.